Consider the following 354-residue polypeptide: Caffeic acid 3-O-methyltransferase (354 aa).

Substrate is bound at residue 121 to 127; that stretch reads MNQDKVL. The interval 153–171 is substrate binding; the sequence is AFEYHGKDQRFNKVFNSGM. The S-adenosyl-L-methionine site is built by Gly-199, Asp-222, Asp-242, Met-243, and Lys-256. The Proton acceptor role is filled by His-260.

It belongs to the class I-like SAM-binding methyltransferase superfamily. Cation-independent O-methyltransferase family. COMT subfamily. In terms of assembly, homodimer.

The enzyme catalyses (E)-caffeate + S-adenosyl-L-methionine = (E)-ferulate + S-adenosyl-L-homocysteine + H(+). It participates in aromatic compound metabolism; phenylpropanoid biosynthesis. In terms of biological role, catalyzes the conversion of caffeic acid to ferulic acid and of 5-hydroxyferulic acid to sinapic acid. The resulting products may subsequently be converted to the corresponding alcohols that are incorporated into lignins. This is Caffeic acid 3-O-methyltransferase from Zinnia elegans (Garden zinnia).